Here is a 317-residue protein sequence, read N- to C-terminus: Sperm acrosome membrane-associated protein 6 (317 aa).

A signal peptide spans 1-18 (MFVFIAKLLIFSSVITSA). Topologically, residues 19–281 (FTCYQCFIDE…PSFSFWLPRP (263 aa)) are extracellular. 5 disulfides stabilise this stretch: C21/C143, C24/C146, C35/C51, C128/C151, and C132/C157. N29 is a glycosylation site (N-linked (GlcNAc...) asparagine). Positions 123–237 (PRVSGCLPPC…EVLSQEQSLV (115 aa)) constitute an Ig-like domain. N168 carries an N-linked (GlcNAc...) asparagine glycan. A disulfide bridge links C174 with C227. Residues 282-302 (ALLITCLTATMLLIFLSLGAM) traverse the membrane as a helical segment. The Cytoplasmic segment spans residues 303–317 (CRLWYQIRTNVSNPA).

Belongs to the SPACA6 family. As to quaternary structure, forms a complex with izumo1 and tmem81 on spermatocyte cell membrane. The complex binds to oocyte protein bncr. Expressed in testis.

It localises to the cytoplasmic vesicle. Its subcellular location is the secretory vesicle. It is found in the acrosome membrane. In terms of biological role, sperm protein required for fusion of sperm with the egg membrane during fertilization. May regulate the expression of sperm surface protein DCST2. The sequence is that of Sperm acrosome membrane-associated protein 6 from Danio rerio (Zebrafish).